A 366-amino-acid chain; its full sequence is Cobalt-precorrin-5B C(1)-methyltransferase (366 aa).

The protein belongs to the CbiD family.

It carries out the reaction Co-precorrin-5B + S-adenosyl-L-methionine = Co-precorrin-6A + S-adenosyl-L-homocysteine. The protein operates within cofactor biosynthesis; adenosylcobalamin biosynthesis; cob(II)yrinate a,c-diamide from sirohydrochlorin (anaerobic route): step 6/10. In terms of biological role, catalyzes the methylation of C-1 in cobalt-precorrin-5B to form cobalt-precorrin-6A. The polypeptide is Cobalt-precorrin-5B C(1)-methyltransferase (Paraburkholderia phymatum (strain DSM 17167 / CIP 108236 / LMG 21445 / STM815) (Burkholderia phymatum)).